The sequence spans 624 residues: MDLAQDIADDLMIDAAQEVRIRQDLVLTALGHRPADRALRVGRLLDVHSRTWSEDQEIVFKGRRIAWVGPAGSYRGEVRERVQRPDLAAVPGFGEVHKHIESSHLTPEWEAALVLPRGNTWTCEASHEFSNVNGARNLEFWFEARRRGSPLKIFPQPGSAVPPTAYEWGGGWYGGAEQASFMRESLMVTGLDEVMDWPAVWNPDNPSYERLWGMIGATFAARGVVEGHASGLRELPEINAFAAAGLASDHEVQTPEETWDKLTRGLFIELRIYAMPEIIGWLLKKGLQDWSQIAFTTDDRSASHTLALGASDHNARVAIEAGLAPEIAIQCLTINPARHMRLTPFVGSLAPGRFGDVVLLSDVGKLEIAEVWADGAQVSEGTRYLGDVPRIAWPDWATQTINIKREIKAEDFALPAAPGRTTMQAAVIRPFHWHPEFYTFELAVRDGAVQRDESQAITKFAIVDRFSGDGLVSKMFWKGCGPRTPETALACSVAHDKHNIWAVGSSDAAMAKAVNALVAQQGGWALVREGELAATVRFEVGGLMSCRRAEALDAEMQALYAEGRKVDWMYEPTFRPRWYPGFPERLMFATLTCAPWSWVLVAPCEQAPQGFINVQTGKTHPVVW.

This sequence belongs to the metallo-dependent hydrolases superfamily. Adenine deaminase family. Mn(2+) is required as a cofactor.

The catalysed reaction is adenine + H2O + H(+) = hypoxanthine + NH4(+). The chain is Adenine deaminase 1 from Bradyrhizobium sp. (strain ORS 278).